We begin with the raw amino-acid sequence, 566 residues long: Rho GTPase-activating protein gacH (566 aa).

Disordered stretches follow at residues 1 to 56 (MSGV…SGAT), 65 to 84 (LLKQ…NNNK), 128 to 168 (SEDE…SAHS), and 322 to 366 (KPQV…NSKN). Residues 14-35 (SSTTATTTGSSKSSLNISKSVS) show a composition bias toward low complexity. Residues 36–56 (PTGNKAVSPMSSPNSLQSGAT) show a composition bias toward polar residues. The span at 65–83 (LLKQQQQPNHSITTNNNNN) shows a compositional bias: low complexity. Residues 130 to 141 (DEYEDDEDEDEN) are compositionally biased toward acidic residues. The segment covering 142–160 (NNSVNNNSNNNSNNNNNNN) has biased composition (low complexity). The span at 327–337 (KSPQSSGSLST) shows a compositional bias: polar residues. A compositionally biased stretch (low complexity) spans 345 to 356 (SSSLQRSRSVSQ). Positions 369-564 (GSLDTILEKE…LLIENYNLFY (196 aa)) constitute a Rho-GAP domain.

It localises to the cytoplasm. Functionally, rho GTPase-activating protein involved in the signal transduction pathway. In Dictyostelium discoideum (Social amoeba), this protein is Rho GTPase-activating protein gacH (gacH).